Consider the following 99-residue polypeptide: Nucleoid-associated protein SUB1611 (99 aa).

It belongs to the YbaB/EbfC family. In terms of assembly, homodimer.

Its subcellular location is the cytoplasm. It localises to the nucleoid. Binds to DNA and alters its conformation. May be involved in regulation of gene expression, nucleoid organization and DNA protection. The protein is Nucleoid-associated protein SUB1611 of Streptococcus uberis (strain ATCC BAA-854 / 0140J).